Reading from the N-terminus, the 983-residue chain is ABC transporter A family member 2 (983 aa).

Helical transmembrane passes span 33–53 (FLQL…QAAM), 221–241 (IVAL…FGFV), 279–299 (ILTA…QFDF), 305–325 (FPVV…LAFM), 339–359 (VGFF…SGFP), and 416–436 (VLTI…WFVL). In terms of domain architecture, ABC transporter spans 518–763 (VQIRGLAKTY…FGTGFIANIS (246 aa)). Position 564–571 (564–571 (GPNGAGKT)) interacts with ATP. Residues 963 to 983 (RSGSTSSRRFSRSGSSRRFSS) form a disordered region.

Belongs to the ABC transporter superfamily. ABCA family. CPR flippase (TC 3.A.1.211) subfamily.

The protein localises to the membrane. The chain is ABC transporter A family member 2 (ABCA2) from Arabidopsis thaliana (Mouse-ear cress).